An 875-amino-acid chain; its full sequence is DNA gyrase subunit A (875 aa).

A Topo IIA-type catalytic domain is found at 34 to 533; the sequence is LPDVRDGLKP…NSADINLEDL (500 aa). Catalysis depends on tyrosine 122, which acts as the O-(5'-phospho-DNA)-tyrosine intermediate. The short motif at 560–566 is the GyrA-box element; that stretch reads QRRGGKG. The tract at residues 841–875 is disordered; it reads EPVDEEDLDTIDGSAAEGDDEIAPEVDVDDEPEEE. A compositionally biased stretch (acidic residues) spans 857–875; that stretch reads EGDDEIAPEVDVDDEPEEE.

The protein belongs to the type II topoisomerase GyrA/ParC subunit family. In terms of assembly, heterotetramer, composed of two GyrA and two GyrB chains. In the heterotetramer, GyrA contains the active site tyrosine that forms a transient covalent intermediate with DNA, while GyrB binds cofactors and catalyzes ATP hydrolysis.

The protein localises to the cytoplasm. It catalyses the reaction ATP-dependent breakage, passage and rejoining of double-stranded DNA.. Functionally, a type II topoisomerase that negatively supercoils closed circular double-stranded (ds) DNA in an ATP-dependent manner to modulate DNA topology and maintain chromosomes in an underwound state. Negative supercoiling favors strand separation, and DNA replication, transcription, recombination and repair, all of which involve strand separation. Also able to catalyze the interconversion of other topological isomers of dsDNA rings, including catenanes and knotted rings. Type II topoisomerases break and join 2 DNA strands simultaneously in an ATP-dependent manner. The polypeptide is DNA gyrase subunit A (Shigella flexneri).